Consider the following 156-residue polypeptide: Cyanate hydratase (156 aa).

Catalysis depends on residues arginine 96, glutamate 99, and serine 122.

The protein belongs to the cyanase family.

It catalyses the reaction cyanate + hydrogencarbonate + 3 H(+) = NH4(+) + 2 CO2. Catalyzes the reaction of cyanate with bicarbonate to produce ammonia and carbon dioxide. In Serratia proteamaculans (strain 568), this protein is Cyanate hydratase.